Reading from the N-terminus, the 360-residue chain is S-adenosylmethionine:tRNA ribosyltransferase-isomerase (360 aa).

This sequence belongs to the QueA family. In terms of assembly, monomer.

It is found in the cytoplasm. It carries out the reaction 7-aminomethyl-7-carbaguanosine(34) in tRNA + S-adenosyl-L-methionine = epoxyqueuosine(34) in tRNA + adenine + L-methionine + 2 H(+). It participates in tRNA modification; tRNA-queuosine biosynthesis. In terms of biological role, transfers and isomerizes the ribose moiety from AdoMet to the 7-aminomethyl group of 7-deazaguanine (preQ1-tRNA) to give epoxyqueuosine (oQ-tRNA). This chain is S-adenosylmethionine:tRNA ribosyltransferase-isomerase, found in Rhodopseudomonas palustris (strain ATCC BAA-98 / CGA009).